The chain runs to 339 residues: Annexin A2 (339 aa).

Position 2 is an N-acetylserine (Ser-2). The S100A10-binding site stretch occupies residues 2-24 (STVHEILCKLSLEGDHSTPPSAY). The residue at position 24 (Tyr-24) is a Phosphotyrosine; by SRC. Ser-26 is subject to Phosphoserine; by PKC. Annexin repeat units lie at residues 33-104 (FDAE…GLLK) and 105-176 (TPAQ…ALAK). At Lys-49 the chain carries N6-acetyllysine; alternate. Residue Lys-49 forms a Glycyl lysine isopeptide (Lys-Gly) (interchain with G-Cter in SUMO1); alternate linkage. A Glycyl lysine isopeptide (Lys-Gly) (interchain with G-Cter in SUMO2); alternate cross-link involves residue Lys-49. Lys-152 carries the post-translational modification N6-acetyllysine. Ser-184 is subject to Phosphoserine. Annexin repeat units follow at residues 189 to 261 (ELID…NLVQ) and 265 to 336 (NKPL…YLCG). Residue Tyr-199 is modified to Phosphotyrosine. Lys-227 is subject to N6-acetyllysine.

This sequence belongs to the annexin family. As to quaternary structure, heterotetramer containing 2 light chains of S100A10/p11 and 2 heavy chains of ANXA2/p36. Interacts with ATP1B1. Interacts with DYSF. Interacts with COCH. Interacts (via repeat Annexin 1) with PCSK9 (via the C-terminal domain); the interaction inhibits the degradation of LDLR. Interacts with CEACAM1 (via the cytoplasmic domain); this interaction is regulated by phosphorylation of CEACAM1. Interacts with APPL2 and APPL1; targets APPL2 to endosomes and acting in parallel to RAB5A. Interacts with S100A4. May interact with UBAP2. In terms of processing, ISGylated. Expressed strongly in velvet antler reserve mesenchyme.

The protein localises to the secreted. It localises to the extracellular space. Its subcellular location is the extracellular matrix. The protein resides in the basement membrane. Its function is as follows. Calcium-regulated membrane-binding protein whose affinity for calcium is greatly enhanced by anionic phospholipids. It binds two calcium ions with high affinity. May be involved in heat-stress response. Inhibits PCSK9-enhanced LDLR degradation, probably reduces PCSK9 protein levels via a translational mechanism but also competes with LDLR for binding with PCSK9. Binds to endosomes damaged by phagocytosis of particulate wear debris and participates in endosomal membrane stabilization, thereby limiting NLRP3 inflammasome activation. Required for endothelial cell surface plasmin generation and may support fibrinolytic surveillance and neoangiogenesis. The polypeptide is Annexin A2 (ANXA2) (Cervus elaphus (Red deer)).